Here is a 224-residue protein sequence, read N- to C-terminus: Deoxyribose-phosphate aldolase (224 aa).

Asp-92 acts as the Proton donor/acceptor in catalysis. The Schiff-base intermediate with acetaldehyde role is filled by Lys-155. Catalysis depends on Lys-184, which acts as the Proton donor/acceptor.

This sequence belongs to the DeoC/FbaB aldolase family. DeoC type 1 subfamily.

The protein localises to the cytoplasm. The enzyme catalyses 2-deoxy-D-ribose 5-phosphate = D-glyceraldehyde 3-phosphate + acetaldehyde. It participates in carbohydrate degradation; 2-deoxy-D-ribose 1-phosphate degradation; D-glyceraldehyde 3-phosphate and acetaldehyde from 2-deoxy-alpha-D-ribose 1-phosphate: step 2/2. In terms of biological role, catalyzes a reversible aldol reaction between acetaldehyde and D-glyceraldehyde 3-phosphate to generate 2-deoxy-D-ribose 5-phosphate. The chain is Deoxyribose-phosphate aldolase from Clostridium perfringens (strain 13 / Type A).